We begin with the raw amino-acid sequence, 428 residues long: D-amino acid dehydrogenase (428 aa).

3–17 (VVILGSGVVGVASAY) contributes to the FAD binding site.

Belongs to the DadA oxidoreductase family. FAD serves as cofactor.

The catalysed reaction is a D-alpha-amino acid + A + H2O = a 2-oxocarboxylate + AH2 + NH4(+). Its pathway is amino-acid degradation; D-alanine degradation; NH(3) and pyruvate from D-alanine: step 1/1. Its function is as follows. Oxidative deamination of D-amino acids. This is D-amino acid dehydrogenase from Burkholderia cenocepacia (strain HI2424).